Reading from the N-terminus, the 288-residue chain is Homoserine kinase (288 aa).

78-88 lines the ATP pocket; it reads PLARGLGSSSS.

It belongs to the GHMP kinase family. Homoserine kinase subfamily.

It localises to the cytoplasm. The catalysed reaction is L-homoserine + ATP = O-phospho-L-homoserine + ADP + H(+). The protein operates within amino-acid biosynthesis; L-threonine biosynthesis; L-threonine from L-aspartate: step 4/5. Functionally, catalyzes the ATP-dependent phosphorylation of L-homoserine to L-homoserine phosphate. The chain is Homoserine kinase from Streptococcus agalactiae serotype V (strain ATCC BAA-611 / 2603 V/R).